We begin with the raw amino-acid sequence, 731 residues long: Endopolyphosphatase (731 aa).

Residues 1–4 lie on the Cytoplasmic side of the membrane; sequence MSLS. The helical; Signal-anchor for type II membrane protein transmembrane segment at 5 to 25 threads the bilayer; that stretch reads RCILGLACLWHGVIASPLGAV. Over 26–731 the chain is Vacuolar; that stretch reads PSNIPIATDL…VEKEDLKKFT (706 aa). Asparagine 106 carries an N-linked (GlcNAc...) asparagine glycan. The tract at residues 375–403 is disordered; sequence KLQPPPTDSKNSGQLKKGKKGRKGKKKKP. Over residues 390–402 the composition is skewed to basic residues; sequence KKGKKGRKGKKKK. Asparagine 433 carries an N-linked (GlcNAc...) asparagine glycan. Positions 456-522 are disordered; the sequence is EQNDRQKHLD…PPGPAYSPQP (67 aa). 2 stretches are compositionally biased toward basic and acidic residues: residues 457-474 and 492-501; these read QNDR…PSHM and GGDSKPKKPD. Over residues 505–519 the composition is skewed to pro residues; it reads PHPPAKSSPPGPAYS. N-linked (GlcNAc...) asparagine glycans are attached at residues asparagine 534 and asparagine 540. The tract at residues 626-706 is disordered; the sequence is AKSIDVSYES…HKKKKGKKRQ (81 aa). The span at 636-686 shows a compositional bias: acidic residues; it reads AAEEEEEEEEEEEEDLFEEVEETDEEEEQEDDDLSDGEEVDDDSDEDELET. The span at 691-706 shows a compositional bias: basic residues; it reads KHDKKKHKKKKGKKRQ.

The protein belongs to the endopolyphosphatase PPN1 family. A divalent metal cation is required as a cofactor. In terms of processing, processing by proteases in the vacuole may be required for activation.

The protein localises to the vacuole membrane. The catalysed reaction is [phosphate](n+1) + n H2O = (n+1) phosphate + n H(+). Its function is as follows. Catalyzes the hydrolysis of inorganic polyphosphate (polyP) chains of many hundreds of phosphate residues into shorter lengths. The protein is Endopolyphosphatase (epp-1) of Neurospora crassa (strain ATCC 24698 / 74-OR23-1A / CBS 708.71 / DSM 1257 / FGSC 987).